Consider the following 99-residue polypeptide: Small ribosomal subunit protein bS21 (99 aa).

Positions 60-99 (KKLQREGLLPMKPKPVFGAGPGGDRRGPGAGPGAGPRPAR) are disordered.

Belongs to the bacterial ribosomal protein bS21 family.

This Rhodopseudomonas palustris (strain BisA53) protein is Small ribosomal subunit protein bS21.